The primary structure comprises 487 residues: Pentatricopeptide repeat-containing protein At5g61370, mitochondrial (487 aa).

The N-terminal 90 residues, 1–90 (MMSTTVRLNR…TSPRRLLRFF (90 aa)), are a transit peptide targeting the mitochondrion. PPR repeat units lie at residues 137–171 (DKQT…SCPQ), 172–202 (DGFT…HKDV), 207–241 (ELSV…GITP), 242–283 (DLFC…KIQP), 284–318 (TSMS…GCDP), 319–353 (DTGS…GFRP), 354–388 (ERKF…SVGG), and 389–423 (YGQV…DVTL). The disordered stretch occupies residues 466-487 (TKPKLKLKPKRRSKTKKKNLQH).

This sequence belongs to the PPR family. P subfamily.

Its subcellular location is the mitochondrion. The sequence is that of Pentatricopeptide repeat-containing protein At5g61370, mitochondrial from Arabidopsis thaliana (Mouse-ear cress).